A 182-amino-acid chain; its full sequence is Riboflavin kinase (182 aa).

Positions 39 and 41 each coordinate Mg(2+). The Nucleophile role is filled by Glu117.

Belongs to the flavokinase family. Requires Zn(2+) as cofactor. Mg(2+) serves as cofactor.

The enzyme catalyses riboflavin + ATP = FMN + ADP + H(+). It functions in the pathway cofactor biosynthesis; FMN biosynthesis; FMN from riboflavin (ATP route): step 1/1. In terms of biological role, catalyzes the phosphorylation of riboflavin (vitamin B2) to form flavin mononucleotide (FMN) coenzyme. This chain is Riboflavin kinase (FMN1), found in Lodderomyces elongisporus (strain ATCC 11503 / CBS 2605 / JCM 1781 / NBRC 1676 / NRRL YB-4239) (Yeast).